The primary structure comprises 1846 residues: C2 domain-containing protein (1846 aa).

Residues 16 to 36 (NTEKEEGKNAEINENNDPNTQ) are disordered. Residues 17 to 26 (TEKEEGKNAE) show a composition bias toward basic and acidic residues. Positions 27-36 (INENNDPNTQ) are enriched in polar residues. One can recognise a C2 domain in the interval 497 to 623 (VPRYRQRGDI…FNEKNVRRNK (127 aa)). 2 stretches are compositionally biased toward basic and acidic residues: residues 1193–1211 (DEHT…DNYK) and 1230–1243 (KDDH…KVSK). 5 disordered regions span residues 1193 to 1244 (DEHT…VSKS), 1346 to 1370 (KYTI…KKQD), 1456 to 1635 (KNER…KKRV), 1652 to 1692 (NEKM…NNER), and 1827 to 1846 (EEPS…VRKN). Residues 1349–1506 (INEKRDDIKT…DENMKEEQKM (158 aa)) are a coiled coil. Composition is skewed to basic and acidic residues over residues 1456 to 1474 (KNER…QKDK), 1481 to 1629 (ESRD…MRRE), 1652 to 1663 (NEKMKKKEEKEE), and 1670 to 1692 (KEDI…NNER). The segment covering 1834–1846 (SPQKKKIVIVRKN) has biased composition (basic residues).

It is found in the membrane. In terms of biological role, binds calcium and phospholipids. Regulates microneme secretion. The protein is C2 domain-containing protein of Plasmodium falciparum (isolate 3D7).